Reading from the N-terminus, the 280-residue chain is 3-methyl-2-oxobutanoate hydroxymethyltransferase (280 aa).

Residues Asp-45 and Asp-84 each coordinate Mg(2+). 3-methyl-2-oxobutanoate is bound by residues Asp-45–Ser-46, Asp-84, and Lys-114. Position 116 (Glu-116) interacts with Mg(2+). Glu-183 serves as the catalytic Proton acceptor.

Belongs to the PanB family. Homodecamer; pentamer of dimers. The cofactor is Mg(2+).

The protein localises to the cytoplasm. It carries out the reaction 3-methyl-2-oxobutanoate + (6R)-5,10-methylene-5,6,7,8-tetrahydrofolate + H2O = 2-dehydropantoate + (6S)-5,6,7,8-tetrahydrofolate. Its pathway is cofactor biosynthesis; (R)-pantothenate biosynthesis; (R)-pantoate from 3-methyl-2-oxobutanoate: step 1/2. In terms of biological role, catalyzes the reversible reaction in which hydroxymethyl group from 5,10-methylenetetrahydrofolate is transferred onto alpha-ketoisovalerate to form ketopantoate. The sequence is that of 3-methyl-2-oxobutanoate hydroxymethyltransferase from Clostridium kluyveri (strain ATCC 8527 / DSM 555 / NBRC 12016 / NCIMB 10680 / K1).